The chain runs to 624 residues: LEAF RUST 10 DISEASE-RESISTANCE LOCUS RECEPTOR-LIKE PROTEIN KINASE-like 2.2 (624 aa).

Positions Met1 to Ser30 are cleaved as a signal peptide. Residues Gln31–Thr263 are Extracellular-facing. Residues Asn45, Asn75, Asn85, Asn95, Asn150, and Asn164 are each glycosylated (N-linked (GlcNAc...) asparagine). A helical transmembrane segment spans residues Ile264–Phe284. Residues Trp285–Val624 lie on the Cytoplasmic side of the membrane. The 283-residue stretch at Lys317–Leu599 folds into the Protein kinase domain. ATP is bound by residues Val323 to Val331 and Lys345. The Proton acceptor role is filled by Asp434. The interval Asn587 to Val624 is disordered. Residues Met603 to Val624 are compositionally biased toward polar residues.

The protein belongs to the protein kinase superfamily. Ser/Thr protein kinase family.

It is found in the membrane. The catalysed reaction is L-seryl-[protein] + ATP = O-phospho-L-seryl-[protein] + ADP + H(+). The enzyme catalyses L-threonyl-[protein] + ATP = O-phospho-L-threonyl-[protein] + ADP + H(+). The protein is LEAF RUST 10 DISEASE-RESISTANCE LOCUS RECEPTOR-LIKE PROTEIN KINASE-like 2.2 of Arabidopsis thaliana (Mouse-ear cress).